The chain runs to 589 residues: Isocitrate dehydrogenase kinase/phosphatase (589 aa).

ATP contacts are provided by residues 317-323 (AAGIKGM) and Lys338. Asp373 is an active-site residue.

It belongs to the AceK family.

The protein localises to the cytoplasm. It catalyses the reaction L-seryl-[isocitrate dehydrogenase] + ATP = O-phospho-L-seryl-[isocitrate dehydrogenase] + ADP + H(+). In terms of biological role, bifunctional enzyme which can phosphorylate or dephosphorylate isocitrate dehydrogenase (IDH) on a specific serine residue. This is a regulatory mechanism which enables bacteria to bypass the Krebs cycle via the glyoxylate shunt in response to the source of carbon. When bacteria are grown on glucose, IDH is fully active and unphosphorylated, but when grown on acetate or ethanol, the activity of IDH declines drastically concomitant with its phosphorylation. This Colwellia psychrerythraea (strain 34H / ATCC BAA-681) (Vibrio psychroerythus) protein is Isocitrate dehydrogenase kinase/phosphatase.